Consider the following 298-residue polypeptide: Protoheme IX farnesyltransferase (298 aa).

The next 9 helical transmembrane spans lie at 24 to 44 (VIQLIVFCALIGMVLAVPGLP), 49 to 69 (LQLALLACLGIWLVAGAAAAF), 100 to 120 (LLFSAVLCAAGSILLYFWVNP), 121 to 141 (LTMWLTFATFIGYAVVYTVIL), 149 to 169 (IVIGGASGAMPPVLGWAAMAG), 175 to 195 (ALILFLIIFLWTPPHFWALAL), 220 to 240 (LMVLLYTFILFAACLMPYVYG), 244 to 264 (WLYLIAAVVLNLGFCLYAFYL), and 277 to 297 (FRFSLIHLSLLFAALLLDHYL).

Belongs to the UbiA prenyltransferase family. Protoheme IX farnesyltransferase subfamily.

It localises to the cell inner membrane. The catalysed reaction is heme b + (2E,6E)-farnesyl diphosphate + H2O = Fe(II)-heme o + diphosphate. The protein operates within porphyrin-containing compound metabolism; heme O biosynthesis; heme O from protoheme: step 1/1. Converts heme B (protoheme IX) to heme O by substitution of the vinyl group on carbon 2 of heme B porphyrin ring with a hydroxyethyl farnesyl side group. This chain is Protoheme IX farnesyltransferase, found in Albidiferax ferrireducens (strain ATCC BAA-621 / DSM 15236 / T118) (Rhodoferax ferrireducens).